Here is a 1536-residue protein sequence, read N- to C-terminus: Glycogen debranching enzyme (1536 aa).

Active-site residues include D535, H538, and D670.

It belongs to the glycogen debranching enzyme family. As to quaternary structure, interacts with IGD1.

Its subcellular location is the mitochondrion. It localises to the cytoplasm. It carries out the reaction Transfers a segment of a (1-&gt;4)-alpha-D-glucan to a new position in an acceptor, which may be glucose or a (1-&gt;4)-alpha-D-glucan.. The enzyme catalyses Hydrolysis of (1-&gt;6)-alpha-D-glucosidic branch linkages in glycogen phosphorylase limit dextrin.. Its activity is regulated as follows. Activity is inhibited by IGD1. Functionally, multifunctional enzyme acting as 1,4-alpha-D-glucan:1,4-alpha-D-glucan 4-alpha-D-glycosyltransferase and amylo-1,6-glucosidase in glycogen degradation. The sequence is that of Glycogen debranching enzyme (GDB1) from Saccharomyces cerevisiae (strain ATCC 204508 / S288c) (Baker's yeast).